We begin with the raw amino-acid sequence, 317 residues long: Heme-binding protein HMX1 (317 aa).

The Cytoplasmic segment spans residues 1 to 289 (MEDSSNTIIP…FNKDSATRRA (289 aa)). The chain crosses the membrane as a helical; Anchor for type IV membrane protein span at residues 290–310 (LHTVMLLVLSIIAIWVLYFLV).

Heme serves as cofactor.

It is found in the endoplasmic reticulum membrane. Its function is as follows. Plays an important role in the degradation of heme under conditions of iron deprivation. This is Heme-binding protein HMX1 (HMX1) from Saccharomyces cerevisiae (strain ATCC 204508 / S288c) (Baker's yeast).